A 343-amino-acid chain; its full sequence is Glyceraldehyde-3-phosphate dehydrogenase (343 aa).

NAD(+) is bound by residues T11 to I12 and G110. S139–N141 lines the D-glyceraldehyde 3-phosphate pocket. C140 (nucleophile) is an active-site residue. R168 lines the NAD(+) pocket. H194–G195 contributes to the D-glyceraldehyde 3-phosphate binding site. Q301 lines the NAD(+) pocket.

The protein belongs to the glyceraldehyde-3-phosphate dehydrogenase family. In terms of assembly, homotetramer.

Its subcellular location is the cytoplasm. It catalyses the reaction D-glyceraldehyde 3-phosphate + phosphate + NADP(+) = (2R)-3-phospho-glyceroyl phosphate + NADPH + H(+). The catalysed reaction is D-glyceraldehyde 3-phosphate + phosphate + NAD(+) = (2R)-3-phospho-glyceroyl phosphate + NADH + H(+). It functions in the pathway carbohydrate degradation; glycolysis; pyruvate from D-glyceraldehyde 3-phosphate: step 1/5. This is Glyceraldehyde-3-phosphate dehydrogenase from Methanoregula boonei (strain DSM 21154 / JCM 14090 / 6A8).